We begin with the raw amino-acid sequence, 276 residues long: N-acetylmuramoyl-L-alanine amidase AmiD (276 aa).

A signal peptide spans 1–16 (MRRFFWLVAAALLLAG). Cys17 carries the N-palmitoyl cysteine lipid modification. A lipid anchor (S-diacylglycerol cysteine) is attached at Cys17. Positions 42 to 179 (PRIKVLVIHY…APQRKDDPGP (138 aa)) constitute an N-acetylmuramoyl-L-alanine amidase domain. Zn(2+) is bound at residue His50. 51–52 (YT) lines the substrate pocket. The active-site Proton acceptor is the Glu119. The Zn(2+) site is built by His166 and Asp176.

It belongs to the N-acetylmuramoyl-L-alanine amidase 2 family. Requires Zn(2+) as cofactor.

The protein resides in the cell outer membrane. The catalysed reaction is Hydrolyzes the link between N-acetylmuramoyl residues and L-amino acid residues in certain cell-wall glycopeptides.. This is N-acetylmuramoyl-L-alanine amidase AmiD (amiD) from Escherichia coli (strain K12).